The following is a 236-amino-acid chain: NADH-quinone oxidoreductase subunit C (236 aa).

The segment at 1–20 is disordered; the sequence is MSPPNQDAQEGRPDSPTAEV.

It belongs to the complex I 30 kDa subunit family. As to quaternary structure, NDH-1 is composed of 14 different subunits. Subunits NuoB, C, D, E, F, and G constitute the peripheral sector of the complex.

It localises to the cell membrane. The catalysed reaction is a quinone + NADH + 5 H(+)(in) = a quinol + NAD(+) + 4 H(+)(out). In terms of biological role, NDH-1 shuttles electrons from NADH, via FMN and iron-sulfur (Fe-S) centers, to quinones in the respiratory chain. The immediate electron acceptor for the enzyme in this species is believed to be a menaquinone. Couples the redox reaction to proton translocation (for every two electrons transferred, four hydrogen ions are translocated across the cytoplasmic membrane), and thus conserves the redox energy in a proton gradient. The polypeptide is NADH-quinone oxidoreductase subunit C (Mycobacterium tuberculosis (strain ATCC 25177 / H37Ra)).